A 299-amino-acid chain; its full sequence is Prohibitin-2 (299 aa).

Ala-2 is modified (N-acetylalanine). The segment at 19–49 (MGTALKLLLGAGAVAYGVRESVFTVEGGHRA) is necessary for transcriptional repression. Tyr-128 carries the post-translational modification Phosphotyrosine. The residue at position 147 (Lys-147) is an N6-acetyllysine. The tract at residues 150 to 174 (ASQLITQRAQVSLLIRRELTERAKD) is necessary for transcriptional repression. Phosphoserine is present on Ser-151. Positions 190-238 (SREYTAAVEAKQVAQQEAQRAQFLVEKAKQEQRQKIVQAEGEAEAAKML) form a coiled coil. 4 positions are modified to N6-acetyllysine: Lys-200, Lys-236, Lys-250, and Lys-262.

Belongs to the prohibitin family. The mitochondrial prohibitin complex consists of two subunits (PHB1 and PHB2), assembled into a membrane-associated ring-shaped supercomplex of approximately 1 mDa. Interacts with ESR1, HDAC1 and HDAC5. Interacts with ZNF703. Interacts with STOML2. Interacts with ARFGEF3. Interacts with SPHK2. Interacts with COX4I1; the interaction associates PHB2 with COX. Interacts with MAP1LC3B (membrane-bound form LC3-II); the interaction is direct and upon mitochondrial depolarization and proteasome-dependent outer membrane rupture. Interacts with IGFBP6 (via C-terminal domain). Interacts with CLPB. Interacts with CD86 (via cytoplasmic domain); the interactions increases after priming with CD40. Interacts with AFG3L2. Interacts with DNAJC19. Interacts with AKT2; this interaction may be important for myogenic differentiation. In terms of processing, phosphorylated. Tyrosine phosphorylation is indirectly stimulated by IGFBP6.

Its subcellular location is the mitochondrion inner membrane. It is found in the cytoplasm. The protein resides in the nucleus. It localises to the cell membrane. Functionally, protein with pleiotropic attributes mediated in a cell-compartment- and tissue-specific manner, which include the plasma membrane-associated cell signaling functions, mitochondrial chaperone, and transcriptional co-regulator of transcription factors and sex steroid hormones in the nucleus. Its function is as follows. In the mitochondria, together with PHB, forms large ring complexes (prohibitin complexes) in the inner mitochondrial membrane (IMM) and functions as a chaperone protein that stabilizes mitochondrial respiratory enzymes and maintains mitochondrial integrity in the IMM, which is required for mitochondrial morphogenesis, neuronal survival, and normal lifespan. The prohibitin complex, with DNAJC19, regulates cardiolipin remodeling and the protein turnover of OMA1 in a cardiolipin-binding manner. Also regulates cytochrome-c oxidase assembly (COX) and mitochondrial respiration. Binding to sphingoid 1-phosphate (SPP) modulates its regulator activity. Has a key role of mitophagy receptor involved in targeting mitochondria for autophagic degradation. Involved in mitochondrial-mediated antiviral innate immunity, activates RIG-I-mediated signal transduction and production of IFNB1 and pro-inflammatory cytokine IL6. In the nucleus, serves as transcriptional co-regulator. Acts as a mediator of transcriptional repression by nuclear hormone receptors via recruitment of histone deacetylases. Functions as an estrogen receptor (ER)-selective coregulator that potentiates the inhibitory activities of antiestrogens and represses the activity of estrogens. Competes with NCOA1 for modulation of ER transcriptional activity. In terms of biological role, in the plasma membrane, is involved in IGFBP6-induced cell migration. Cooperates with CD86 to mediate CD86-signaling in B lymphocytes that regulates the level of IgG1 produced through the activation of distal signaling intermediates. Upon CD40 engagement, required to activate NF-kappa-B signaling pathway via phospholipase C and protein kinase C activation. This chain is Prohibitin-2 (PHB2), found in Pongo abelii (Sumatran orangutan).